A 314-amino-acid polypeptide reads, in one-letter code: uncharacterized protein (314 aa).

The first 20 residues, 1–20 (MKKRAGIWAALLLAAVMLAG), serve as a signal peptide directing secretion. The N-palmitoyl cysteine moiety is linked to residue cysteine 21. A lipid anchor (S-diacylglycerol cysteine) is attached at cysteine 21. Residues 59–311 (KIVSLMPSNT…ELAESIYPDT (253 aa)) enclose the Fe/B12 periplasmic-binding domain.

Belongs to the bacterial solute-binding protein 8 family. The complex is composed of two ATP-binding proteins (YvrA), two transmembrane proteins (YvrB) and a solute-binding protein (YvrC).

The protein localises to the cell membrane. Functionally, probably part of an ABC transporter complex. This is an uncharacterized protein from Bacillus subtilis (strain 168).